The chain runs to 473 residues: Aspartyl/glutamyl-tRNA(Asn/Gln) amidotransferase subunit B (473 aa).

It belongs to the GatB/GatE family. GatB subfamily. In terms of assembly, heterotrimer of A, B and C subunits.

The enzyme catalyses L-glutamyl-tRNA(Gln) + L-glutamine + ATP + H2O = L-glutaminyl-tRNA(Gln) + L-glutamate + ADP + phosphate + H(+). It carries out the reaction L-aspartyl-tRNA(Asn) + L-glutamine + ATP + H2O = L-asparaginyl-tRNA(Asn) + L-glutamate + ADP + phosphate + 2 H(+). Functionally, allows the formation of correctly charged Asn-tRNA(Asn) or Gln-tRNA(Gln) through the transamidation of misacylated Asp-tRNA(Asn) or Glu-tRNA(Gln) in organisms which lack either or both of asparaginyl-tRNA or glutaminyl-tRNA synthetases. The reaction takes place in the presence of glutamine and ATP through an activated phospho-Asp-tRNA(Asn) or phospho-Glu-tRNA(Gln). This chain is Aspartyl/glutamyl-tRNA(Asn/Gln) amidotransferase subunit B, found in Francisella tularensis subsp. mediasiatica (strain FSC147).